A 358-amino-acid polypeptide reads, in one-letter code: DNA polymerase IV (358 aa).

One can recognise a UmuC domain in the interval 4-185; sequence IIHIDMDCYF…LPLIKIPGVG (182 aa). 2 residues coordinate Mg(2+): aspartate 8 and aspartate 103. Residue glutamate 104 is part of the active site.

It belongs to the DNA polymerase type-Y family. In terms of assembly, monomer. Requires Mg(2+) as cofactor.

Its subcellular location is the cytoplasm. The enzyme catalyses DNA(n) + a 2'-deoxyribonucleoside 5'-triphosphate = DNA(n+1) + diphosphate. Its function is as follows. Poorly processive, error-prone DNA polymerase involved in untargeted mutagenesis. Copies undamaged DNA at stalled replication forks, which arise in vivo from mismatched or misaligned primer ends. These misaligned primers can be extended by PolIV. Exhibits no 3'-5' exonuclease (proofreading) activity. May be involved in translesional synthesis, in conjunction with the beta clamp from PolIII. The sequence is that of DNA polymerase IV from Shewanella denitrificans (strain OS217 / ATCC BAA-1090 / DSM 15013).